We begin with the raw amino-acid sequence, 123 residues long: Large ribosomal subunit protein uL14 (123 aa).

It belongs to the universal ribosomal protein uL14 family. As to quaternary structure, part of the 50S ribosomal subunit. Forms a cluster with proteins L3 and L19. In the 70S ribosome, L14 and L19 interact and together make contacts with the 16S rRNA in bridges B5 and B8.

Binds to 23S rRNA. Forms part of two intersubunit bridges in the 70S ribosome. The polypeptide is Large ribosomal subunit protein uL14 (Citrobacter koseri (strain ATCC BAA-895 / CDC 4225-83 / SGSC4696)).